Consider the following 1413-residue polypeptide: MKALLDLFKQVQQEEVFDAIKIGLASPDKIRSWSFGEVKKPETINYRTFKPERDGLFCAKIFGPIKDYECLCGKYKRLKHRGVICEKCGVEVTLAKVRRERMGHIELASPVAHIWFLKSLPSRLGMVLDMTLRDIERVLYFEAYVVIEPGMTPLKARQIMTEEDYYNKVEEYGDEFRAEMGAEGVRELLRAINIDEQVETLRTELKNTGSEAKIKKYAKRLKVLEAFQRSGIKPEWMILEVLPVLPPELRPLVPLDGGRFATSDLNDLYRRVINRNNRLKRLLELKAPEIIVRNEKRMLQEAVDSLLDNGRRGKAMTGANKRPLKSLADMIKGKGGRFRQNLLGKRVDYSGRSVIVVGPTLKLHQCGLPKLMALELFKPFIFNKLEVMGVATTIKAAKKEVENQTPVVWDILEEVIREHPVMLNRAPTLHRLGIQAFEPVLIEGKAIQLHPLVCAAFNADFDGDQMAVHVPLSLEAQMEARTLMLASNNVLFPANGDPSIVPSQDIVLGLYYATREAVNAKGEGLSFTGVSEVIRAYENKEVELASRVNVRITEMVRNEDTSEGAPQFVPKISLYATTVGRAILSEILPHGLPFSVLNKPLKKKEISRLINTAFRKCGLRATVVFADQLMQSGFRLATRAGISICVDDMLVPPQKETIVGDAAKKVKEYDRQYMSGLVTAQERYNNVVDIWSATSEAVGKAMMEQLSTEPVIDRDGNETRQESFNSIYMMADSGARGSAVQIRQLAGMRGLMAKPDGSIIETPITANFREGLNVLQYFISTHGARKGLADTALKTANSGYLTRRLVDVTQDLVVVEDDCGTSNGVAMKALVEGGEVVEALRDRILGRVAVADVVNPETQETLYESGTLLDETAVEEIERLGIDEVRVRTPLTCETRYGLCAACYGRDLGRGSLVNVGEAVGVIAAQSIGEPGTQLTMRTFHIGGAASRAAVASSVEAKSNGIVRFTATMRYVTNAKGEQIVISRSGEALITDDIGRERERHKIPYGATLLQLDGATIKAGTQLATWDPMTRPIITEYGGTVKFENVEEGVTVAKQIDDVTGLSTLVVIDVKRRGSQASKSVRPQVKLLDANGEEVKIPGTEHAVQIGFQVGALITVKDGQQVQVGEVLARIPTEAQKTRDITGGLPRVAELFEARSPKDAGILAEVTGTTSFGKDTKGKQRLVITDLEGNQHEFLIAKEKQVLVHDAQVVNKGEMIVDGPADPHDILRLQGIEALSRYIVDEVQDVYRLQGVKINDKHIEVIVRQMLRRVQITDNGDTRFIPGEQVERSDMLDENDRMIAEGKRPASYDNVLLGITKASLSTDSFISAASFQETTRVLTEAAIMGKRDDLRGLKENVIVGRLIPAGTGLAFHKARKAKEMSDRERFDQIAAEEAFDFGTPSAPAEEPQHPAAE.

C70, C72, C85, and C88 together coordinate Zn(2+). Positions 460, 462, and 464 each coordinate Mg(2+). Residues C819, C893, C900, and C903 each contribute to the Zn(2+) site.

This sequence belongs to the RNA polymerase beta' chain family. As to quaternary structure, the RNAP catalytic core consists of 2 alpha, 1 beta, 1 beta' and 1 omega subunit. When a sigma factor is associated with the core the holoenzyme is formed, which can initiate transcription. Mg(2+) is required as a cofactor. Requires Zn(2+) as cofactor.

It catalyses the reaction RNA(n) + a ribonucleoside 5'-triphosphate = RNA(n+1) + diphosphate. Functionally, DNA-dependent RNA polymerase catalyzes the transcription of DNA into RNA using the four ribonucleoside triphosphates as substrates. The sequence is that of DNA-directed RNA polymerase subunit beta' from Burkholderia vietnamiensis (strain G4 / LMG 22486) (Burkholderia cepacia (strain R1808)).